The following is a 242-amino-acid chain: Transcriptional regulatory protein GltR (242 aa).

The Response regulatory domain maps to 7 to 123 (SILLVDDDQE…ELLARIKALL (117 aa)). A 4-aspartylphosphate modification is found at aspartate 56. Residues 134 to 234 (GDVLAFEDWR…VRGSGYLLAA (101 aa)) constitute a DNA-binding region (ompR/PhoB-type).

In terms of processing, phosphorylated by GtrS.

It is found in the cytoplasm. With respect to regulation, phosphorylation of GltR induces its dissociation from DNA leading to transcriptional activation. In terms of biological role, member of the two-component regulatory system GtrS/GltR involved in the regulation of glucose metabolism and transport, as well as regulation of the exotoxin A gene expression. GltR controls the transcription of genes involved in glucose metabolism (glk and edd/gap-1) and transport (oprB) as well as the expression of toxA that encodes exotoxin A, the primary virulence factor. Acts as a repressor that is released from its target operators upon phosphorylation. Contributes to modulation of the type III secretion system (T3SS) in response to host cells via the regulation of the OprB transport system. This is Transcriptional regulatory protein GltR from Pseudomonas aeruginosa (strain ATCC 15692 / DSM 22644 / CIP 104116 / JCM 14847 / LMG 12228 / 1C / PRS 101 / PAO1).